A 2059-amino-acid chain; its full sequence is Non-reducing polyketide synthase stmB (2059 aa).

Residues 7 to 243 (LLFGDQTVEL…LKLAAYGAVH (237 aa)) form the Starter acyltransferase (SAT) domain. Residues 366-796 (SNSIAIVGMA…GGNSCLILEE (431 aa)) form the Ketosynthase family 3 (KS3) domain. Active-site for beta-ketoacyl synthase activity residues include Cys-538, His-673, and His-713. The Malonyl-CoA:ACP transacylase (MAT) domain occupies 895 to 1185 (WVFSGQGSQY…CGSMVKATLG (291 aa)). The tract at residues 1273-1413 (LHFVKKETVT…SASEWTDEWS (141 aa)) is N-terminal hotdog fold. Residues 1273–1581 (LHFVKKETVT…FQRMPRMVLH (309 aa)) form the PKS/mFAS DH domain. Residue His-1306 is the Proton acceptor; for dehydratase activity of the active site. The interval 1435-1581 (GDHLRRPVVY…FQRMPRMVLH (147 aa)) is C-terminal hotdog fold. Asp-1495 acts as the Proton donor; for dehydratase activity in catalysis. A Carrier domain is found at 1619–1696 (PPKHDLADQL…DARRALGGDE (78 aa)). Residue Ser-1656 is modified to O-(pantetheine 4'-phosphoryl)serine. Residues 1693–1727 (GGDETASESENDAEGDAPSDGGSPSGSWTPISPPE) are disordered. The span at 1697–1709 (TASESENDAEGDA) shows a compositional bias: acidic residues. The segment covering 1710–1719 (PSDGGSPSGS) has biased composition (low complexity). The segment at 1778-2059 (AVEYKSNVVL…LGKLLQEAVA (282 aa)) is thioesterase (TE) domain.

Requires pantetheine 4'-phosphate as cofactor.

It participates in mycotoxin biosynthesis. Functionally, non-reducing polyketide synthase; part of the gene cluster that mediates the biosynthesis of stromemycin, a depside C-glucoside with two unsaturated C9 side chains belonging to aromatic polyketide glycosides. The HR-PKS stmA and the NR-PKS stmB act as scaffold-generating enzymes responsible for the biosynthesis of the polyketide skeleton bininalkenylresorcylic acid. StmA condenses on acetyl-CoA starter unit with 4 malonyl-CoA units and the stmB uses 3 more malonyl-CoA units and catalyzes the depside bond formation. The glycoytransferase stmC then acts as the tailoring enzyme responsible for 3-C-glucosylation of bininalkenylresorcylic acid to yield stromemycin. In Aspergillus ustus, this protein is Non-reducing polyketide synthase stmB.